A 111-amino-acid polypeptide reads, in one-letter code: MFGKAGLGGLMKQAQQMQENMKKAQAKLAETEIEGEAGNGLVKITMTCAHEVRKIDISPDLIQEAADDKEMLEDLILAALKSARGKAEETANKTMGAFTQDLPPGVGDFFR.

Belongs to the YbaB/EbfC family. As to quaternary structure, homodimer.

Its subcellular location is the cytoplasm. It is found in the nucleoid. In terms of biological role, binds to DNA and alters its conformation. May be involved in regulation of gene expression, nucleoid organization and DNA protection. In Neisseria gonorrhoeae (strain NCCP11945), this protein is Nucleoid-associated protein NGK_1136.